A 424-amino-acid chain; its full sequence is Probable threonylcarbamoyladenosine tRNA methylthiotransferase (424 aa).

One can recognise an MTTase N-terminal domain in the interval 1 to 106 (MRVAIETYGC…VVDAVYSALN (106 aa)). 6 residues coordinate [4Fe-4S] cluster: cysteine 10, cysteine 44, cysteine 73, cysteine 143, cysteine 147, and cysteine 150. Positions 129–359 (LRENAIAIVS…TDLMRKIGLE (231 aa)) constitute a Radical SAM core domain. Residues 362–420 (KRFVGKKLRVLVTKEGKNGRNLARMNSYRAVVTEGAVGEFVEVKIKDCRFNYLIGQLAA) form the TRAM domain.

This sequence belongs to the methylthiotransferase family. CDKAL1 subfamily. [4Fe-4S] cluster serves as cofactor.

It carries out the reaction N(6)-L-threonylcarbamoyladenosine(37) in tRNA + (sulfur carrier)-SH + AH2 + 2 S-adenosyl-L-methionine = 2-methylsulfanyl-N(6)-L-threonylcarbamoyladenosine(37) in tRNA + (sulfur carrier)-H + 5'-deoxyadenosine + L-methionine + A + S-adenosyl-L-homocysteine + 2 H(+). Catalyzes the methylthiolation of N6-threonylcarbamoyladenosine (t(6)A), leading to the formation of 2-methylthio-N6-threonylcarbamoyladenosine (ms(2)t(6)A) at position 37 in tRNAs that read codons beginning with adenine. In Archaeoglobus fulgidus (strain ATCC 49558 / DSM 4304 / JCM 9628 / NBRC 100126 / VC-16), this protein is Probable threonylcarbamoyladenosine tRNA methylthiotransferase.